The following is a 316-amino-acid chain: Ribosomal RNA small subunit methyltransferase H (316 aa).

S-adenosyl-L-methionine contacts are provided by residues 35–37 (GGH), aspartate 55, phenylalanine 79, aspartate 101, and glutamine 108.

Belongs to the methyltransferase superfamily. RsmH family.

It is found in the cytoplasm. The enzyme catalyses cytidine(1402) in 16S rRNA + S-adenosyl-L-methionine = N(4)-methylcytidine(1402) in 16S rRNA + S-adenosyl-L-homocysteine + H(+). Its function is as follows. Specifically methylates the N4 position of cytidine in position 1402 (C1402) of 16S rRNA. The protein is Ribosomal RNA small subunit methyltransferase H of Aliivibrio salmonicida (strain LFI1238) (Vibrio salmonicida (strain LFI1238)).